Reading from the N-terminus, the 478-residue chain is V-type ATP synthase beta chain (478 aa).

This sequence belongs to the ATPase alpha/beta chains family.

Functionally, produces ATP from ADP in the presence of a proton gradient across the membrane. The V-type beta chain is a regulatory subunit. The chain is V-type ATP synthase beta chain from Thermus thermophilus (strain ATCC BAA-163 / DSM 7039 / HB27).